Consider the following 319-residue polypeptide: HPr kinase/phosphorylase (319 aa).

Catalysis depends on residues His-137 and Lys-158. 152–159 (GDSGVGKS) serves as a coordination point for ATP. Mg(2+) is bound at residue Ser-159. Asp-176 functions as the Proton acceptor; for phosphorylation activity. Proton donor; for dephosphorylation activity in the catalytic mechanism. An important for the catalytic mechanism of both phosphorylation and dephosphorylation region spans residues 201 to 210 (MEIRGLGIIN). Glu-202 is a binding site for Mg(2+). Arg-243 is a catalytic residue. Positions 264 to 269 (PVRPGR) are important for the catalytic mechanism of dephosphorylation.

This sequence belongs to the HPrK/P family. In terms of assembly, homohexamer. Requires Mg(2+) as cofactor.

It catalyses the reaction [HPr protein]-L-serine + ATP = [HPr protein]-O-phospho-L-serine + ADP + H(+). It carries out the reaction [HPr protein]-O-phospho-L-serine + phosphate + H(+) = [HPr protein]-L-serine + diphosphate. Catalyzes the ATP- as well as the pyrophosphate-dependent phosphorylation of a specific serine residue in HPr, a phosphocarrier protein of the phosphoenolpyruvate-dependent sugar phosphotransferase system (PTS). HprK/P also catalyzes the pyrophosphate-producing, inorganic phosphate-dependent dephosphorylation (phosphorolysis) of seryl-phosphorylated HPr (P-Ser-HPr). The chain is HPr kinase/phosphorylase (hprK) from Treponema pallidum (strain Nichols).